Consider the following 275-residue polypeptide: Elongation factor Ts (275 aa).

The tract at residues 80–83 is involved in Mg(2+) ion dislocation from EF-Tu; the sequence is TDFV.

Belongs to the EF-Ts family.

The protein localises to the cytoplasm. Functionally, associates with the EF-Tu.GDP complex and induces the exchange of GDP to GTP. It remains bound to the aminoacyl-tRNA.EF-Tu.GTP complex up to the GTP hydrolysis stage on the ribosome. The protein is Elongation factor Ts of Clavibacter michiganensis subsp. michiganensis (strain NCPPB 382).